The chain runs to 801 residues: Ent-copalyl diphosphate synthase, chloroplastic (801 aa).

Lys241 contacts substrate. Mg(2+)-binding residues include Asp373 and Asp375. The DXDD motif signature appears at 373–376; the sequence is DIDD. Lys459 is a binding site for substrate.

Belongs to the terpene synthase family. It depends on Mg(2+) as a cofactor.

The protein resides in the plastid. It is found in the chloroplast. The catalysed reaction is (2E,6E,10E)-geranylgeranyl diphosphate = ent-copalyl diphosphate. The protein operates within plant hormone biosynthesis; gibberellin biosynthesis. In terms of biological role, catalyzes the conversion of geranylgeranyl diphosphate to the gibberellin precursor ent-copalyl diphosphate. This chain is Ent-copalyl diphosphate synthase, chloroplastic, found in Pisum sativum (Garden pea).